The chain runs to 147 residues: Large ribosomal subunit protein uL15 (147 aa).

A disordered region spans residues 1–45 (MRLEDLRPTPGAMKKRKRVGRGPGSGHGKTSGRGHKGQKARGSGK). The span at 30–44 (TSGRGHKGQKARGSG) shows a compositional bias: basic residues.

The protein belongs to the universal ribosomal protein uL15 family. Part of the 50S ribosomal subunit.

Functionally, binds to the 23S rRNA. This Thermotoga sp. (strain RQ2) protein is Large ribosomal subunit protein uL15.